The sequence spans 494 residues: Glutamyl-tRNA(Gln) amidotransferase subunit A (494 aa).

Active-site charge relay system residues include Lys80 and Ser160. Positions 140-168 are disordered; that stretch reads GNVISPWRRPGDTAPLAPGGSSGGSSSAV. Catalysis depends on Ser184, which acts as the Acyl-ester intermediate.

Belongs to the amidase family. GatA subfamily. As to quaternary structure, heterotrimer of A, B and C subunits.

The catalysed reaction is L-glutamyl-tRNA(Gln) + L-glutamine + ATP + H2O = L-glutaminyl-tRNA(Gln) + L-glutamate + ADP + phosphate + H(+). In terms of biological role, allows the formation of correctly charged Gln-tRNA(Gln) through the transamidation of misacylated Glu-tRNA(Gln) in organisms which lack glutaminyl-tRNA synthetase. The reaction takes place in the presence of glutamine and ATP through an activated gamma-phospho-Glu-tRNA(Gln). The protein is Glutamyl-tRNA(Gln) amidotransferase subunit A of Novosphingobium aromaticivorans (strain ATCC 700278 / DSM 12444 / CCUG 56034 / CIP 105152 / NBRC 16084 / F199).